Here is a 50-residue protein sequence, read N- to C-terminus: Defensin D1 (50 aa).

4 disulfides stabilise this stretch: cysteine 3-cysteine 50, cysteine 14-cysteine 35, cysteine 20-cysteine 44, and cysteine 24-cysteine 46.

Contains 4 disulfide bonds.

The protein localises to the secreted. Functionally, antimicrobial peptide active against fungi, Gram-positive and Gram-negative bacteria. Inhibits growth of hyphae in the fungi A.niger (IC(50)=3.5 ug/ml), B.sorokiniana (IC(50)=3.0 ug/ml), F.oxysporum (IC(50)=9.5 ug/ml), F.graminearum (IC(50)=6.9 ug/ml), F.culmorum (IC(50)=6.9 ug/ml) and B.cinerea (IC(50)=27.4 ug/ml). Has no effect on spore germination. Destroys spores in germinated conidia by disruption of cell walls and membranes in A.niger and B.sorokiniana. Causes vacuolization of germinated macro- and microconidia in F.oxysporum, F.graminearum and F.culmorum. Strongly inhibits growth of P.infestans on potato tubers above concentrations of 13.6 ug/ml. Inhibits growth of Gram-positive bacteria C.michiganensis and B.subtilis and of Gram-negative bacteria P.syringae, E.carotovora and E.coli. In Nigella sativa (Black cumin), this protein is Defensin D1.